The sequence spans 155 residues: RNA pyrophosphohydrolase (155 aa).

Residues 5 to 147 (RYRPNVAAIV…KRPVYKKVLE (143 aa)) form the Nudix hydrolase domain. A Nudix box motif is present at residues 42-63 (GGIDKGESPKEALLRELKEEIG).

It belongs to the Nudix hydrolase family. RppH subfamily. The cofactor is a divalent metal cation.

In terms of biological role, accelerates the degradation of transcripts by removing pyrophosphate from the 5'-end of triphosphorylated RNA, leading to a more labile monophosphorylated state that can stimulate subsequent ribonuclease cleavage. This chain is RNA pyrophosphohydrolase, found in Nitratiruptor sp. (strain SB155-2).